Reading from the N-terminus, the 251-residue chain is tRNA (guanine-N(1)-)-methyltransferase (251 aa).

S-adenosyl-L-methionine is bound by residues glycine 113 and 133-138 (IGDYVL).

Belongs to the RNA methyltransferase TrmD family. Homodimer.

The protein resides in the cytoplasm. The enzyme catalyses guanosine(37) in tRNA + S-adenosyl-L-methionine = N(1)-methylguanosine(37) in tRNA + S-adenosyl-L-homocysteine + H(+). Functionally, specifically methylates guanosine-37 in various tRNAs. This chain is tRNA (guanine-N(1)-)-methyltransferase, found in Methylococcus capsulatus (strain ATCC 33009 / NCIMB 11132 / Bath).